Reading from the N-terminus, the 232-residue chain is MKKLLVIDFKEKIKYEDAWNFQRKLHDLRVNNIIYDTLILLEHFPVITLGKFGNESNLLKRKEELEDIGIDFLRVDRGGDITYHGPLQLVGYLIFRVEGVKNFVLKIERSIINVLNEYGIEAKENLKYPGVWVGDRKIAAIGIAIKKKVSYHGFALNVSNDLTPFSYIIPCGLKDKKVTSILKEADFSPSMEDVKKKVCLSVVREFGFDSFKVFNFSSYKELSNFDMLLEDQ.

The region spanning 32–219 (NIIYDTLILL…SFKVFNFSSY (188 aa)) is the BPL/LPL catalytic domain. Residues 77-84 (RGGDITYH), 140-142 (AIG), and 153-155 (GFA) contribute to the substrate site. Cys-171 functions as the Acyl-thioester intermediate in the catalytic mechanism.

It belongs to the LipB family.

The protein localises to the cytoplasm. The catalysed reaction is octanoyl-[ACP] + L-lysyl-[protein] = N(6)-octanoyl-L-lysyl-[protein] + holo-[ACP] + H(+). It participates in protein modification; protein lipoylation via endogenous pathway; protein N(6)-(lipoyl)lysine from octanoyl-[acyl-carrier-protein]: step 1/2. In terms of biological role, catalyzes the transfer of endogenously produced octanoic acid from octanoyl-acyl-carrier-protein onto the lipoyl domains of lipoate-dependent enzymes. Lipoyl-ACP can also act as a substrate although octanoyl-ACP is likely to be the physiological substrate. The sequence is that of Octanoyltransferase from Dictyoglomus turgidum (strain DSM 6724 / Z-1310).